The primary structure comprises 518 residues: Arrestin-related trafficking adapter 10 (518 aa).

A Glycyl lysine isopeptide (Lys-Gly) (interchain with G-Cter in ubiquitin) cross-link involves residue Lys118.

The protein belongs to the ART10 family. In terms of assembly, interacts with RSP5. Ubiquitinated by RSP5.

It localises to the cytoplasm. Functionally, may regulate endocytosis by recruiting RSP5 ubiquitin ligase activity to specific plasma membrane proteins in response to extracellular stimuli. This is Arrestin-related trafficking adapter 10 (ART10) from Saccharomyces cerevisiae (strain RM11-1a) (Baker's yeast).